The primary structure comprises 87 residues: Type 3 secretion system needle filament protein (87 aa).

Belongs to the SctF family. As to quaternary structure, the core secretion machinery of the T3SS is composed of approximately 20 different proteins, including cytoplasmic components, a base, an export apparatus and a needle. This subunit polymerizes and forms the helical needle filament. Forms high-order oligomers in vitro. Forms a stable ternary complex with the YscE-YscG chaperone. Interacts directly with YscG but makes very little direct contact with YscE. Interacts with the needle adapter protein YscI/SctI.

The protein localises to the secreted. Its subcellular location is the cell surface. With respect to regulation, the secretion and/or polymerization may be controlled by the type III secretion system regulator YopR. Interaction with YscE-YscG chaperone prevents premature polymerization of YscF/SctF in the bacterial cytosol and is required for its stability and efficient secretion. Interaction with the needle adapter protein YscI/SctI is required for YscF/SctF secretion, needle assembly and Yop secretion. The N-terminus varies among bacterial species, not only in amino acid composition but also in the number of amino acids, and may function in manipulating the host response to the advantage of the bacteria. In Y.pestis, the N-terminus can function to decrease cytokine induction, perhaps contributing to a favorable immune environment leading to survival of Y.pestis within the eukaryotic host. Component of the type III secretion system (T3SS), also called injectisome, which is used to inject bacterial effector proteins into eukaryotic host cells. YscF/SctF forms the external needle filament that protrudes from the bacterial surface. Essential for the calcium-dependent regulation of T3SS and Yop secretion. Required to block Yop secretion in the presence of extracellular calcium. May be the extracellular T3SS component that senses extracellular calcium and/or participates in transmitting the calcium signal to the cytoplasmic compartment where the block in secretion is initiated. In terms of biological role, during infection, can induce innate immune responses. The needle proteins interact with host TLR2 or TLR4, and induce signaling by NF-kappa-B and/or AP-1. This activation is MyD88 dependent and results in increased expression of cytokines, including TNF-alpha, IL-6 and IL-8. Innate immune responses are modulated by the N-terminal region of YscF/SctF. This chain is Type 3 secretion system needle filament protein, found in Yersinia pestis.